Here is a 165-residue protein sequence, read N- to C-terminus: Large ribosomal subunit protein uL10 (165 aa).

This sequence belongs to the universal ribosomal protein uL10 family. Part of the ribosomal stalk of the 50S ribosomal subunit. The N-terminus interacts with L11 and the large rRNA to form the base of the stalk. The C-terminus forms an elongated spine to which L12 dimers bind in a sequential fashion forming a multimeric L10(L12)X complex.

Functionally, forms part of the ribosomal stalk, playing a central role in the interaction of the ribosome with GTP-bound translation factors. In Burkholderia lata (strain ATCC 17760 / DSM 23089 / LMG 22485 / NCIMB 9086 / R18194 / 383), this protein is Large ribosomal subunit protein uL10.